Here is a 1072-residue protein sequence, read N- to C-terminus: Integrator complex subunit 3 homolog (1072 aa).

Disordered regions lie at residues 920 to 941 (YPSS…STSI) and 1002 to 1072 (DTTV…NDSD). Residues S1042, S1043, S1047, and S1048 each carry the phosphoserine modification.

It belongs to the Integrator subunit 3 family. Belongs to the multiprotein complex Integrator, at least composed of IntS1, IntS2, IntS3, IntS4, omd/IntS5, IntS6, defl/IntS7, IntS8, IntS9, IntS10, IntS11, IntS12, asun/IntS13, IntS14 and IntS15. The core complex associates with protein phosphatase 2A subunits mts/PP2A and Pp2A-29B, to form the Integrator-PP2A (INTAC) complex.

The protein localises to the nucleus. It localises to the cytoplasm. Component of the integrator complex, a multiprotein complex that terminates RNA polymerase II (Pol II) transcription in the promoter-proximal region of genes. The integrator complex provides a quality checkpoint during transcription elongation by driving premature transcription termination of transcripts that are unfavorably configured for transcriptional elongation: the complex terminates transcription by (1) catalyzing dephosphorylation of the C-terminal domain (CTD) of Pol II subunit Polr2A/Rbp1 and Spt5, and (2) degrading the exiting nascent RNA transcript via endonuclease activity. The integrator complex is also involved in the 3'-end processing of the U7 snRNA, and also the spliceosomal snRNAs U1, U2, U4 and U5. In Drosophila erecta (Fruit fly), this protein is Integrator complex subunit 3 homolog (IntS3).